The primary structure comprises 48 residues: DNA-directed RNA polymerase subunit Rpo12 (48 aa).

Residues cysteine 9, cysteine 26, and cysteine 29 each coordinate Zn(2+).

This sequence belongs to the archaeal Rpo12/eukaryotic RPC10 RNA polymerase subunit family. Part of the RNA polymerase complex. Zn(2+) is required as a cofactor.

Its subcellular location is the cytoplasm. The catalysed reaction is RNA(n) + a ribonucleoside 5'-triphosphate = RNA(n+1) + diphosphate. Its function is as follows. DNA-dependent RNA polymerase (RNAP) catalyzes the transcription of DNA into RNA using the four ribonucleoside triphosphates as substrates. The protein is DNA-directed RNA polymerase subunit Rpo12 of Sulfurisphaera tokodaii (strain DSM 16993 / JCM 10545 / NBRC 100140 / 7) (Sulfolobus tokodaii).